We begin with the raw amino-acid sequence, 259 residues long: 5'-nucleotidase SurE (259 aa).

Asp-8, Asp-9, Ser-41, and Asn-100 together coordinate a divalent metal cation.

The protein belongs to the SurE nucleotidase family. Requires a divalent metal cation as cofactor.

It is found in the cytoplasm. It catalyses the reaction a ribonucleoside 5'-phosphate + H2O = a ribonucleoside + phosphate. In terms of biological role, nucleotidase that shows phosphatase activity on nucleoside 5'-monophosphates. In Natranaerobius thermophilus (strain ATCC BAA-1301 / DSM 18059 / JW/NM-WN-LF), this protein is 5'-nucleotidase SurE.